The sequence spans 366 residues: S-adenosylmethionine:tRNA ribosyltransferase-isomerase (366 aa).

It belongs to the QueA family. As to quaternary structure, monomer.

It localises to the cytoplasm. It carries out the reaction 7-aminomethyl-7-carbaguanosine(34) in tRNA + S-adenosyl-L-methionine = epoxyqueuosine(34) in tRNA + adenine + L-methionine + 2 H(+). Its pathway is tRNA modification; tRNA-queuosine biosynthesis. Its function is as follows. Transfers and isomerizes the ribose moiety from AdoMet to the 7-aminomethyl group of 7-deazaguanine (preQ1-tRNA) to give epoxyqueuosine (oQ-tRNA). This chain is S-adenosylmethionine:tRNA ribosyltransferase-isomerase, found in Agrobacterium fabrum (strain C58 / ATCC 33970) (Agrobacterium tumefaciens (strain C58)).